The primary structure comprises 146 residues: 3-hydroxyacyl-[acyl-carrier-protein] dehydratase FabZ (146 aa).

The active site involves His49.

The protein belongs to the thioester dehydratase family. FabZ subfamily.

Its subcellular location is the cytoplasm. It carries out the reaction a (3R)-hydroxyacyl-[ACP] = a (2E)-enoyl-[ACP] + H2O. Involved in unsaturated fatty acids biosynthesis. Catalyzes the dehydration of short chain beta-hydroxyacyl-ACPs and long chain saturated and unsaturated beta-hydroxyacyl-ACPs. This is 3-hydroxyacyl-[acyl-carrier-protein] dehydratase FabZ from Ectopseudomonas mendocina (strain ymp) (Pseudomonas mendocina).